The sequence spans 209 residues: Large ribosomal subunit protein uL3 (209 aa).

Residues 126–148 (HGQSRGPMAHGSRYHRRPGSMGP) form a disordered region.

This sequence belongs to the universal ribosomal protein uL3 family. As to quaternary structure, part of the 50S ribosomal subunit. Forms a cluster with proteins L14 and L19.

One of the primary rRNA binding proteins, it binds directly near the 3'-end of the 23S rRNA, where it nucleates assembly of the 50S subunit. The protein is Large ribosomal subunit protein uL3 of Listeria monocytogenes serotype 4b (strain CLIP80459).